Consider the following 430-residue polypeptide: Tol-Pal system protein TolB (430 aa).

The N-terminal stretch at 1–21 (MKQALRVAFGFLMLWAAVLHA) is a signal peptide.

It belongs to the TolB family. In terms of assembly, the Tol-Pal system is composed of five core proteins: the inner membrane proteins TolA, TolQ and TolR, the periplasmic protein TolB and the outer membrane protein Pal. They form a network linking the inner and outer membranes and the peptidoglycan layer.

The protein localises to the periplasm. Functionally, part of the Tol-Pal system, which plays a role in outer membrane invagination during cell division and is important for maintaining outer membrane integrity. TolB occupies a key intermediary position in the Tol-Pal system because it communicates directly with both membrane-embedded components, Pal in the outer membrane and TolA in the inner membrane. This is Tol-Pal system protein TolB from Klebsiella pneumoniae (strain 342).